The chain runs to 339 residues: Nitrilase 2 (339 aa).

N-acetylserine is present on S2. In terms of domain architecture, CN hydrolase spans 18–290 (VRATIVQAST…EGLITADLDL (273 aa)). E58 (proton acceptor) is an active-site residue. K145 functions as the Proton donor in the catalytic mechanism. C179 acts as the Nucleophile in catalysis.

This sequence belongs to the carbon-nitrogen hydrolase superfamily. Nitrilase family.

It localises to the cell membrane. The catalysed reaction is a nitrile + 2 H2O = a carboxylate + NH4(+). Can convert indole-3-acetonitrile to the plant hormone indole-3-acetic acid. In Arabidopsis thaliana (Mouse-ear cress), this protein is Nitrilase 2 (NIT2).